The sequence spans 245 residues: 4-hydroxy-tetrahydrodipicolinate reductase (245 aa).

Residues 7–12 (GAKGKV), 75–77 (GTT), and 102–105 (APNF) each bind NAD(+). The active-site Proton donor/acceptor is H132. H133 provides a ligand contact to (S)-2,3,4,5-tetrahydrodipicolinate. The active-site Proton donor is the K136. 142 to 143 (GT) contacts (S)-2,3,4,5-tetrahydrodipicolinate.

This sequence belongs to the DapB family.

Its subcellular location is the cytoplasm. The enzyme catalyses (S)-2,3,4,5-tetrahydrodipicolinate + NAD(+) + H2O = (2S,4S)-4-hydroxy-2,3,4,5-tetrahydrodipicolinate + NADH + H(+). It catalyses the reaction (S)-2,3,4,5-tetrahydrodipicolinate + NADP(+) + H2O = (2S,4S)-4-hydroxy-2,3,4,5-tetrahydrodipicolinate + NADPH + H(+). Its pathway is amino-acid biosynthesis; L-lysine biosynthesis via DAP pathway; (S)-tetrahydrodipicolinate from L-aspartate: step 4/4. In terms of biological role, catalyzes the conversion of 4-hydroxy-tetrahydrodipicolinate (HTPA) to tetrahydrodipicolinate. The polypeptide is 4-hydroxy-tetrahydrodipicolinate reductase (Mycobacterium bovis (strain ATCC BAA-935 / AF2122/97)).